We begin with the raw amino-acid sequence, 149 residues long: ER export of PMA1 protein 1 (149 aa).

The Lumenal portion of the chain corresponds to 1 to 6 (MNLYGY). Residues 7–27 (FLLLIIVIAFIALLPLFSGIG) form a helical; Signal-anchor for type II membrane protein membrane-spanning segment. Residues 28 to 149 (TFKLTKPKSS…KKNEAYEGFV (122 aa)) lie on the Cytoplasmic side of the membrane.

In terms of assembly, interacts with PMA1 and PSG1.

The protein localises to the endoplasmic reticulum membrane. It is found in the cytoplasmic vesicle. The protein resides in the COPI-coated vesicle membrane. Its subcellular location is the COPII-coated vesicle membrane. It localises to the golgi apparatus membrane. Functionally, specific cargo receptor protein for the plasma membrane ATPase PMA1 that acts with PSG1 to promote the transport and maturation of PMA1. EXP1 and PSG1 probably act sequentially to promote PMA1 sorting between the ER and the Golgi, with EXP1 promoting PMA1 export from the ER to the Golgi while PSG1 has a role in PMA1 maturation or quality control in the Golgi. The chain is ER export of PMA1 protein 1 from Saccharomyces cerevisiae (strain ATCC 204508 / S288c) (Baker's yeast).